Here is a 315-residue protein sequence, read N- to C-terminus: MASYRVAALYRFTRFEDPAAIQGPLAALCCSLGVKGTLLLAREGINGTIAGEDAAIEAVLAHIRALPGCADLTPKTAWAERMPFYRMKVRLKKEIVTLGEPDLDPTDAGTYVEPADWNALISDPDVLVIDTRNAYEVAVGRFEGAIDPQTASFADFPAWFRDWRKSVEAQRGPEAPLKVAMYCTGGIRCEKSTAFLKAEGVEQVFHLKGGVLDYLEQIPQPESLWRGECFVFDERVSVGHGLVKGDHVLCRGCRMPVSPQDQASPLYVEGVACPACHDQRNEEQKARAAERHRQVLHCEALGVDHVGATLPTKID.

The region spanning 122-223 (SDPDVLVIDT…YLEQIPQPES (102 aa)) is the Rhodanese domain. C183 acts as the Cysteine persulfide intermediate in catalysis.

Belongs to the TrhO family.

The catalysed reaction is uridine(34) in tRNA + AH2 + O2 = 5-hydroxyuridine(34) in tRNA + A + H2O. In terms of biological role, catalyzes oxygen-dependent 5-hydroxyuridine (ho5U) modification at position 34 in tRNAs. This Caulobacter vibrioides (strain ATCC 19089 / CIP 103742 / CB 15) (Caulobacter crescentus) protein is tRNA uridine(34) hydroxylase.